The sequence spans 309 residues: Elongation factor Ts (309 aa).

The involved in Mg(2+) ion dislocation from EF-Tu stretch occupies residues 82–85 (TDFV).

The protein belongs to the EF-Ts family.

It localises to the cytoplasm. Its function is as follows. Associates with the EF-Tu.GDP complex and induces the exchange of GDP to GTP. It remains bound to the aminoacyl-tRNA.EF-Tu.GTP complex up to the GTP hydrolysis stage on the ribosome. This Rickettsia massiliae (strain Mtu5) protein is Elongation factor Ts.